Here is a 44-residue protein sequence, read N- to C-terminus: Thymosin beta-10 (44 aa).

Belongs to the thymosin beta family.

It localises to the cytoplasm. It is found in the cytoskeleton. Functionally, plays an important role in the organization of the cytoskeleton. Binds to and sequesters actin monomers (G actin) and therefore inhibits actin polymerization. The polypeptide is Thymosin beta-10 (Torpedo marmorata (Marbled electric ray)).